A 390-amino-acid polypeptide reads, in one-letter code: 8-amino-7-oxononanoate synthase (390 aa).

Arginine 19 serves as a coordination point for substrate. 106–107 contacts pyridoxal 5'-phosphate; the sequence is GY. A substrate-binding site is contributed by histidine 131. Pyridoxal 5'-phosphate is bound by residues serine 176, histidine 204, and threonine 233. At lysine 236 the chain carries N6-(pyridoxal phosphate)lysine. Threonine 350 provides a ligand contact to substrate.

The protein belongs to the class-II pyridoxal-phosphate-dependent aminotransferase family. BioF subfamily. Homodimer. It depends on pyridoxal 5'-phosphate as a cofactor.

It carries out the reaction 6-carboxyhexanoyl-[ACP] + L-alanine + H(+) = (8S)-8-amino-7-oxononanoate + holo-[ACP] + CO2. The protein operates within cofactor biosynthesis; biotin biosynthesis. Its function is as follows. Catalyzes the decarboxylative condensation of pimeloyl-[acyl-carrier protein] and L-alanine to produce 8-amino-7-oxononanoate (AON), [acyl-carrier protein], and carbon dioxide. The polypeptide is 8-amino-7-oxononanoate synthase (Pseudomonas putida (strain ATCC 47054 / DSM 6125 / CFBP 8728 / NCIMB 11950 / KT2440)).